The following is a 721-amino-acid chain: Long-chain-fatty-acid--CoA ligase ACSBG1 (721 aa).

A disordered region spans residues 1 to 64 (MPRGSEAGYC…SHGLELSAPE (64 aa)). The span at 26 to 52 (QQGASLGTSQDNSQTSSLIDGQTLSKE) shows a compositional bias: polar residues. Phosphoserine occurs at positions 34, 50, 53, and 70. ATP is bound by residues 279–287 (TSGTTGNPK), 469–474 (AGYGLS), D547, and R562. Y655 carries the phosphotyrosine modification. K698 provides a ligand contact to ATP.

This sequence belongs to the ATP-dependent AMP-binding enzyme family. Bubblegum subfamily. As to expression, mainly expressed in brain. Also expressed in adrenal gland and testis. In brain, it is present in cerebral cortical and cerebellar neurons and in steroidogenic cells of the adrenal gland, testis and ovary (at protein level).

The protein localises to the cytoplasm. It is found in the cytoplasmic vesicle. It localises to the microsome. Its subcellular location is the endoplasmic reticulum. The protein resides in the cell membrane. The catalysed reaction is a long-chain fatty acid + ATP + CoA = a long-chain fatty acyl-CoA + AMP + diphosphate. It catalyses the reaction (E)-hexadec-2-enoate + ATP + CoA = (2E)-hexadecenoyl-CoA + AMP + diphosphate. It carries out the reaction hexadecanoate + ATP + CoA = hexadecanoyl-CoA + AMP + diphosphate. Its function is as follows. Catalyzes the conversion of fatty acids such as long-chain and very long-chain fatty acids to their active form acyl-CoAs for both synthesis of cellular lipids, and degradation via beta-oxidation. Can activate diverse saturated, monosaturated and polyunsaturated fatty acids. This Mus musculus (Mouse) protein is Long-chain-fatty-acid--CoA ligase ACSBG1.